A 439-amino-acid polypeptide reads, in one-letter code: MTTPATPTRQTLLDAYFGEYGGQFVPEVLLPALDELERAYVEALEDPTFQQELDDLYTNYLGRPTPITECANLPLEGQGRGTARIFLKREDLVHGGAHKGNQTIGQALLAKRLGKTRLIAETGAGQHGTATAMVAALFGMKCTVYMGAKDVARQQPNVYRMRLMGAEVVAVDEQSGNGLSSAIDVAINDWVNNLEDTHYLLGTAAGPHPFPTLVKKFHSVISRESREQMLERTGALPDAVVACVGGGSNAIGAFAQYLEDQPGNEKVRLIGVEPAGYGLDTDLNGAPIHEGRTMHLHGSNSYALLDEDGNLRNSHSVSAGLDYPGVGPEHAHLKDTGRAEYVGATDAEALQAFRMLSRYEGIIPALESSHALAHALKMAAEATEPINILVNLSGRGDKDVAYVRQLLGDHAALDPATDVLTEVDVLGVLEELTPQADTA.

Lysine 99 carries the post-translational modification N6-(pyridoxal phosphate)lysine.

This sequence belongs to the TrpB family. As to quaternary structure, tetramer of two alpha and two beta chains. Pyridoxal 5'-phosphate serves as cofactor.

It carries out the reaction (1S,2R)-1-C-(indol-3-yl)glycerol 3-phosphate + L-serine = D-glyceraldehyde 3-phosphate + L-tryptophan + H2O. The protein operates within amino-acid biosynthesis; L-tryptophan biosynthesis; L-tryptophan from chorismate: step 5/5. In terms of biological role, the beta subunit is responsible for the synthesis of L-tryptophan from indole and L-serine. The sequence is that of Tryptophan synthase beta chain 2 (trpB2) from Corynebacterium efficiens (strain DSM 44549 / YS-314 / AJ 12310 / JCM 11189 / NBRC 100395).